An 87-amino-acid chain; its full sequence is Large ribosomal subunit protein bL27 (87 aa).

The disordered stretch occupies residues 1 to 22 (MAHKKGQGSVKNGRDSRSKRLG).

It belongs to the bacterial ribosomal protein bL27 family.

The chain is Large ribosomal subunit protein bL27 from Akkermansia muciniphila (strain ATCC BAA-835 / DSM 22959 / JCM 33894 / BCRC 81048 / CCUG 64013 / CIP 107961 / Muc).